A 117-amino-acid chain; its full sequence is Large ribosomal subunit protein eL34 (117 aa).

Ser-12 bears the Phosphoserine mark. 2 positions are modified to N6-acetyllysine: Lys-36 and Lys-43. Residue Lys-108 forms a Glycyl lysine isopeptide (Lys-Gly) (interchain with G-Cter in SUMO2) linkage.

The protein belongs to the eukaryotic ribosomal protein eL34 family. As to quaternary structure, component of the large ribosomal subunit.

It localises to the cytoplasm. Its subcellular location is the cytosol. The protein resides in the endoplasmic reticulum. Component of the large ribosomal subunit. The ribosome is a large ribonucleoprotein complex responsible for the synthesis of proteins in the cell. The sequence is that of Large ribosomal subunit protein eL34 (Rpl34) from Rattus norvegicus (Rat).